We begin with the raw amino-acid sequence, 515 residues long: Putative cytochrome P450 CYP13A2 (515 aa).

Residue Cys-460 coordinates heme.

This sequence belongs to the cytochrome P450 family. Heme is required as a cofactor.

Cytochromes P450 are a group of heme-thiolate monooxygenases. They oxidize a variety of structurally unrelated compounds, including steroids, fatty acids, and xenobiotics. In Caenorhabditis elegans, this protein is Putative cytochrome P450 CYP13A2 (cyp-13A2).